Consider the following 156-residue polypeptide: Small ribosomal subunit protein uS7 (156 aa).

It belongs to the universal ribosomal protein uS7 family. Part of the 30S ribosomal subunit. Contacts proteins S9 and S11.

In terms of biological role, one of the primary rRNA binding proteins, it binds directly to 16S rRNA where it nucleates assembly of the head domain of the 30S subunit. Is located at the subunit interface close to the decoding center, probably blocks exit of the E-site tRNA. This chain is Small ribosomal subunit protein uS7, found in Aliivibrio fischeri (strain MJ11) (Vibrio fischeri).